The sequence spans 55 residues: Large ribosomal subunit protein bL33 (55 aa).

This sequence belongs to the bacterial ribosomal protein bL33 family.

The chain is Large ribosomal subunit protein bL33 from Phenylobacterium zucineum (strain HLK1).